The following is a 685-amino-acid chain: DNA ligase (685 aa).

Residues 39–43 (DGEYD), 88–89 (SL), and glutamate 119 contribute to the NAD(+) site. The N6-AMP-lysine intermediate role is filled by lysine 121. Positions 142, 182, 302, and 326 each coordinate NAD(+). Residues cysteine 420, cysteine 423, cysteine 438, and cysteine 443 each coordinate Zn(2+). In terms of domain architecture, BRCT spans 606-685 (DNATFFSEKR…QTFLEHLDRG (80 aa)).

It belongs to the NAD-dependent DNA ligase family. LigA subfamily. It depends on Mg(2+) as a cofactor. The cofactor is Mn(2+).

The enzyme catalyses NAD(+) + (deoxyribonucleotide)n-3'-hydroxyl + 5'-phospho-(deoxyribonucleotide)m = (deoxyribonucleotide)n+m + AMP + beta-nicotinamide D-nucleotide.. DNA ligase that catalyzes the formation of phosphodiester linkages between 5'-phosphoryl and 3'-hydroxyl groups in double-stranded DNA using NAD as a coenzyme and as the energy source for the reaction. It is essential for DNA replication and repair of damaged DNA. This chain is DNA ligase, found in Desulforapulum autotrophicum (strain ATCC 43914 / DSM 3382 / VKM B-1955 / HRM2) (Desulfobacterium autotrophicum).